Consider the following 1247-residue polypeptide: SAM and SH3 domain-containing protein 1 (1247 aa).

The tract at residues 1-39 (MEDAGAAGPGPEPEPEPEPEPEPAPEPEPEPKPGAGTSE) is disordered. The segment covering 13–28 (PEPEPEPEPEPAPEPE) has biased composition (acidic residues). At S90 the chain carries Phosphoserine. Disordered regions lie at residues 126–145 (VERKNPLHKSNSEDSSVGKG), 221–257 (AALDPADWPDGSYPTFDGSSNCNSREQSDDETEESVK), and 316–344 (FFDGSPEKPPEDDSDSLTTSPSSSSLDTW). S248 is modified (phosphoserine). Residues 331–343 (SLTTSPSSSSLDT) are compositionally biased toward low complexity. Residue S407 is modified to Phosphoserine. The segment at 449–573 (SLGKKVKSVK…DFTPSPYDTD (125 aa)) is disordered. Low complexity-rich tracts occupy residues 468–484 (KYSSSVSEQDSGLDGMP) and 505–523 (GGSVESLRSSLSGQSSMSG). Residues 524–536 (QTVSTTDSSTSNR) show a composition bias toward polar residues. Residues 554 to 615 (PFCGRARVHT…KFIYVDVLSE (62 aa)) form the SH3 domain. Residue S614 is modified to Phosphoserine. Disordered regions lie at residues 616–639 (DEEKPKRPTRRRRKGRPPQPKSVE) and 713–810 (DSQG…LNKN). The segment covering 622 to 631 (RPTRRRRKGR) has biased composition (basic residues). An SAM 1 domain is found at 633-697 (PQPKSVEDLL…LTAVELLQEY (65 aa)). Residues 746-765 (SAKSSTEPSLKSFSRNQLGN) are compositionally biased toward polar residues. Phosphoserine occurs at positions 821 and 839. Disordered regions lie at residues 846–884 (EPGAEQDVPTEVTEPPPQIVPEVPQKTTASSTKAQPLEQ), 903–946 (PQKL…LART), and 971–1065 (DAEQ…SELP). The segment at 852–860 (DVPTEVTEP) is required for interaction with TRAF6. T858 is modified (phosphothreonine). The segment covering 1050-1060 (GSPPSTRPPPW) has biased composition (pro residues). In terms of domain architecture, SAM 2 spans 1177–1241 (GCISSVSDWL…LSAARLFKLP (65 aa)).

In terms of assembly, interacts with GNAS. Interacts with IQGAP1. Interacts with TRAF6 (via C-terminus); the interaction is LPS-dependent. Interacts with MAP3K7, CHUK and IKBKB. As to expression, expressed ubiquitously, with highest levels in lung, placenta, spleen and thymus. Down-regulated in the majority (74%) of breast tumors in comparison with corresponding normal breast epithelial tissues. Expressed in the epidermis, epidermal keratinocytes, dermal fibroblasts and melanocytes.

It localises to the cytoplasm. Functionally, is a positive regulator of NF-kappa-B signaling downstream of TLR4 activation. It acts as a scaffold molecule to assemble a molecular complex that includes TRAF6, MAP3K7, CHUK and IKBKB, thereby facilitating NF-kappa-B signaling activation. Regulates TRAF6 and MAP3K7 ubiquitination. Involved in the regulation of cell mobility. Regulates lipolysaccharide (LPS)-induced endothelial cell migration. Is involved in the regulation of skin pigmentation through the control of melanocyte migration in the epidermis. This chain is SAM and SH3 domain-containing protein 1 (SASH1), found in Homo sapiens (Human).